Reading from the N-terminus, the 103-residue chain is ATP synthase subunit f, mitochondrial (103 aa).

The N-terminal 6 residues, 1–6 (MIFRRQ), are a transit peptide targeting the mitochondrion.

As to quaternary structure, F-type ATP synthases have 2 components, the catalytic core F(1) and the membrane-embedded component F(0), linked together by a central stalk and a peripheral stalk. The central stalk, also called rotor shaft, is often seen as part of F(1). The peripheral stalk is seen as part of F(0). F(0) contains the membrane channel next to the rotor. F-type ATP synthases form dimers but each monomer functions independently in ATP generation. The dimer consists of 17 different polypeptides: ATP1 (subunit alpha, 3 molecules per monomer, part of F(1)), ATP2 (subunit beta, 3 copies per monomer, part of F(1)), ATP3 (subunit gamma, part of the central stalk), ATP4 (subunit b, part of the peripheral stalk), ATP5/OSCP (subunit 5/OSCP, part of the peripheral stalk), ATP6 (subunit a, part of the peripheral stalk), ATP7 (subunit d, part of the peripheral stalk), ATP8 (subunit 8, part of the peripheral stalk), OLI1 (subunit c, part of the rotor, 10 molecules per monomer), ATP14 (subunit h, part of the peripheral stalk), ATP15 (subunit epsilon, part of the central stalk), ATP16 (subunit delta, part of the central stalk), ATP17 (subunit f, part of the peripheral stalk), ATP18 (subunit i/j, part of the peripheral stalk), ATP19 (subunit k, dimer-specific, at interface between monomers), ATP20 (subunit g, at interface between monomers), TIM11 (subunit e, at interface between monomers).

The protein resides in the mitochondrion inner membrane. In terms of biological role, mitochondrial membrane ATP synthase (F(1)F(0) ATP synthase or Complex V) produces ATP from ADP in the presence of a proton gradient across the membrane which is generated by electron transport complexes of the respiratory chain. F-type ATP synthases consist of two structural domains, F(1) - containing the extramembraneous catalytic core, and F(0) - containing the membrane proton channel, linked together by a central stalk and a peripheral stalk. During catalysis, ATP synthesis in the catalytic domain of F(1) is coupled via a rotary mechanism of the central stalk subunits to proton translocation. Part of the complex F(0) domain. Minor subunit located with subunit a/ATP6 in the membrane. The chain is ATP synthase subunit f, mitochondrial from Yarrowia lipolytica (strain CLIB 122 / E 150) (Yeast).